We begin with the raw amino-acid sequence, 201 residues long: Recombination protein RecR (201 aa).

The segment at 59 to 74 (CSRCQNFCEAELCSIC) adopts a C4-type zinc-finger fold. Residues 82-177 (RVLCVVESPT…PVSRIAHGIP (96 aa)) form the Toprim domain.

The protein belongs to the RecR family.

Its function is as follows. May play a role in DNA repair. It seems to be involved in an RecBC-independent recombinational process of DNA repair. It may act with RecF and RecO. This chain is Recombination protein RecR, found in Hahella chejuensis (strain KCTC 2396).